A 263-amino-acid polypeptide reads, in one-letter code: Non-functional protein STAY-GREEN, chloroplastic (263 aa).

Residues 1–54 (MDTLTSAPLLTSKFKPSFSPQQKPCFPHRRRFENGKKKQSIVPVARLFGPAIFE) constitute a chloroplast transit peptide.

The protein belongs to the staygreen family.

It is found in the plastid. The protein resides in the chloroplast. Non-functional protein probably interfering with the disassembling mechanism of the intact light-harvesting complex of photosystem II (LHCII) in the thylakoid membranes. Responsible for a stay-green phenotype. This chain is Non-functional protein STAY-GREEN, chloroplastic (SGR), found in Pisum sativum (Garden pea).